The chain runs to 427 residues: Serine--tRNA ligase (427 aa).

231–233 (TAE) is an L-serine binding site. 262 to 264 (RSE) contributes to the ATP binding site. L-serine is bound at residue E285. 349–352 (EISS) serves as a coordination point for ATP. S385 lines the L-serine pocket.

This sequence belongs to the class-II aminoacyl-tRNA synthetase family. Type-1 seryl-tRNA synthetase subfamily. Homodimer. The tRNA molecule binds across the dimer.

Its subcellular location is the cytoplasm. It carries out the reaction tRNA(Ser) + L-serine + ATP = L-seryl-tRNA(Ser) + AMP + diphosphate + H(+). It catalyses the reaction tRNA(Sec) + L-serine + ATP = L-seryl-tRNA(Sec) + AMP + diphosphate + H(+). It functions in the pathway aminoacyl-tRNA biosynthesis; selenocysteinyl-tRNA(Sec) biosynthesis; L-seryl-tRNA(Sec) from L-serine and tRNA(Sec): step 1/1. Catalyzes the attachment of serine to tRNA(Ser). Is also able to aminoacylate tRNA(Sec) with serine, to form the misacylated tRNA L-seryl-tRNA(Sec), which will be further converted into selenocysteinyl-tRNA(Sec). The sequence is that of Serine--tRNA ligase from Rhizobium leguminosarum bv. trifolii (strain WSM2304).